Here is a 42-residue protein sequence, read N- to C-terminus: Pelovaterin (42 aa).

3 cysteine pairs are disulfide-bonded: Cys8/Cys38, Cys16/Cys32, and Cys24/Cys39.

The protein localises to the secreted. The protein resides in the extracellular space. It localises to the extracellular matrix. Functionally, induces the nucleation and stabilization of vaterite, one of the crystalline polymorphs of calcium carbonate. Exhibits strong antimicrobial activity against Pseudomonas aeruginosa and Proteus vulgaris. The protein is Pelovaterin of Pelodiscus sinensis (Chinese softshell turtle).